The following is a 307-amino-acid chain: 4-diphosphocytidyl-2-C-methyl-D-erythritol kinase (307 aa).

Residue Lys-14 is part of the active site. An ATP-binding site is contributed by 107 to 117; it reads PVAGGMAGGSA. Asp-149 is a catalytic residue.

The protein belongs to the GHMP kinase family. IspE subfamily.

It carries out the reaction 4-CDP-2-C-methyl-D-erythritol + ATP = 4-CDP-2-C-methyl-D-erythritol 2-phosphate + ADP + H(+). Its pathway is isoprenoid biosynthesis; isopentenyl diphosphate biosynthesis via DXP pathway; isopentenyl diphosphate from 1-deoxy-D-xylulose 5-phosphate: step 3/6. Its function is as follows. Catalyzes the phosphorylation of the position 2 hydroxy group of 4-diphosphocytidyl-2C-methyl-D-erythritol. This chain is 4-diphosphocytidyl-2-C-methyl-D-erythritol kinase, found in Thermobifida fusca (strain YX).